A 215-amino-acid polypeptide reads, in one-letter code: Thiamine-phosphate synthase (215 aa).

4-amino-2-methyl-5-(diphosphooxymethyl)pyrimidine-binding positions include 37–41 and asparagine 69; that span reads QLRIK. The Mg(2+) site is built by aspartate 70 and aspartate 89. Residue serine 108 coordinates 4-amino-2-methyl-5-(diphosphooxymethyl)pyrimidine. Residue 134–136 coordinates 2-[(2R,5Z)-2-carboxy-4-methylthiazol-5(2H)-ylidene]ethyl phosphate; it reads TQT. Lysine 137 provides a ligand contact to 4-amino-2-methyl-5-(diphosphooxymethyl)pyrimidine. 2-[(2R,5Z)-2-carboxy-4-methylthiazol-5(2H)-ylidene]ethyl phosphate is bound by residues glycine 166 and 186–187; that span reads VS.

Belongs to the thiamine-phosphate synthase family. Mg(2+) serves as cofactor.

It carries out the reaction 2-[(2R,5Z)-2-carboxy-4-methylthiazol-5(2H)-ylidene]ethyl phosphate + 4-amino-2-methyl-5-(diphosphooxymethyl)pyrimidine + 2 H(+) = thiamine phosphate + CO2 + diphosphate. The enzyme catalyses 2-(2-carboxy-4-methylthiazol-5-yl)ethyl phosphate + 4-amino-2-methyl-5-(diphosphooxymethyl)pyrimidine + 2 H(+) = thiamine phosphate + CO2 + diphosphate. It catalyses the reaction 4-methyl-5-(2-phosphooxyethyl)-thiazole + 4-amino-2-methyl-5-(diphosphooxymethyl)pyrimidine + H(+) = thiamine phosphate + diphosphate. It functions in the pathway cofactor biosynthesis; thiamine diphosphate biosynthesis; thiamine phosphate from 4-amino-2-methyl-5-diphosphomethylpyrimidine and 4-methyl-5-(2-phosphoethyl)-thiazole: step 1/1. Functionally, condenses 4-methyl-5-(beta-hydroxyethyl)thiazole monophosphate (THZ-P) and 2-methyl-4-amino-5-hydroxymethyl pyrimidine pyrophosphate (HMP-PP) to form thiamine monophosphate (TMP). In Yersinia pestis (strain Pestoides F), this protein is Thiamine-phosphate synthase.